Reading from the N-terminus, the 178-residue chain is CASP-like protein 4D1 (178 aa).

N-acetylalanine is present on alanine 2. The Cytoplasmic segment spans residues 2–14 (APPPPAPPSVTLR). Residues 15 to 35 (TVLLLLRVLTAAFLLITVVLI) traverse the membrane as a helical segment. Residues 36–60 (STNTVTLEISSTSIKLPFNDVYAYR) are Extracellular-facing. The helical transmembrane segment at 61 to 81 (YMLSAAVIGLVYAVVQLFLTI) threads the bilayer. At 82 to 97 (SQFATGKTHPLTYQFD) the chain is on the cytoplasmic side. The chain crosses the membrane as a helical span at residues 98–118 (FYGDKVISYLLATGSAAGFGV). Residues 119–149 (SKDLKDTYIALIEFDSTDPVDKFFSKGYASA) are Extracellular-facing. Residues 150–170 (SLLLFAFVSLAVLSVFSSLAL) form a helical membrane-spanning segment. Residues 171 to 178 (SKRPVPVS) are Cytoplasmic-facing.

The protein belongs to the Casparian strip membrane proteins (CASP) family. In terms of assembly, homodimer and heterodimers. As to expression, expressed in the root epidermis.

It localises to the cell membrane. This chain is CASP-like protein 4D1, found in Arabidopsis thaliana (Mouse-ear cress).